The sequence spans 205 residues: Retron Vc95 putative HNH endonuclease (205 aa).

Its function is as follows. Putative HNH endonuclease component of antiviral defense system retron Vc95, composed of a non-coding RNA (ncRNA), a reverse transcriptase (RT), a probable ATP-binding protein and this protein. Expression of retron Vc95 confers protection against bacteriophages T2, T4 and T6. At multiplicity of infection (MOI) of 0.02 cultures slow growth when infected with T4 but do not collapse, at MOI 2 cultures enter growth stasis. In Vibrio cholerae serotype O1 biovar El Tor, this protein is Retron Vc95 putative HNH endonuclease.